Reading from the N-terminus, the 320-residue chain is MIKKIGVLTSGGDAPGMNAAIRGVVRAALSKGLDVYGIHDGYLGLYEGRIEQLDRHSVSDVINRGGTFLGSARFPEFRDEKVREKAVENMREFGLDALVVIGGDGSYLGAKRLTEMGFPCIGLPGTIDNDVAGTDYTIGYFTALETVVEAIDRLRDTSSSHQRISIVEVMGRYCGDLTLAAAIAGGCEYIVLPEVEFKREDLVEEIKVGITKGKKHAIVAITEHICDVDELAKFIEQETGRETRSTVLGHIQRGGAPVAYDRILASRMGAYSIELLLQGYGGRCVGIQNEKLVHHDIIDAVENMKRPFKGDWLDTAKMLF.

An ATP-binding site is contributed by G12. 22 to 26 is an ADP binding site; the sequence is RGVVR. ATP is bound by residues 73-74 and 103-106; these read RF and GDGS. D104 lines the Mg(2+) pocket. 126–128 provides a ligand contact to substrate; that stretch reads TID. Residue D128 is the Proton acceptor of the active site. Residue R155 coordinates ADP. Residues R163 and 170–172 contribute to the substrate site; that span reads MGR. Residues 186–188, K212, and 214–216 each bind ADP; these read GCE and KKH. Residues E223, R244, and 250 to 253 each bind substrate; that span reads HIQR.

Belongs to the phosphofructokinase type A (PFKA) family. ATP-dependent PFK group I subfamily. Prokaryotic clade 'B1' sub-subfamily. Homotetramer. The cofactor is Mg(2+).

It localises to the cytoplasm. It carries out the reaction beta-D-fructose 6-phosphate + ATP = beta-D-fructose 1,6-bisphosphate + ADP + H(+). It participates in carbohydrate degradation; glycolysis; D-glyceraldehyde 3-phosphate and glycerone phosphate from D-glucose: step 3/4. Allosterically activated by ADP and other diphosphonucleosides, and allosterically inhibited by phosphoenolpyruvate. Catalyzes the phosphorylation of D-fructose 6-phosphate to fructose 1,6-bisphosphate by ATP, the first committing step of glycolysis. This Edwardsiella ictaluri (strain 93-146) protein is ATP-dependent 6-phosphofructokinase.